A 156-amino-acid polypeptide reads, in one-letter code: Endoribonuclease YbeY (156 aa).

Residues His-122, His-126, and His-132 each contribute to the Zn(2+) site.

Belongs to the endoribonuclease YbeY family. Zn(2+) is required as a cofactor.

The protein localises to the cytoplasm. Functionally, single strand-specific metallo-endoribonuclease involved in late-stage 70S ribosome quality control and in maturation of the 3' terminus of the 16S rRNA. The polypeptide is Endoribonuclease YbeY (Bacillus cereus (strain ATCC 10987 / NRS 248)).